We begin with the raw amino-acid sequence, 200 residues long: Serotonin N-acetyltransferase 2, chloroplastic (200 aa).

The N-terminal 41 residues, 1 to 41, are a transit peptide targeting the chloroplast; that stretch reads MQMQAARPRVGVRPRGGIRPFPLPTLSFNNNSNRSACACAC. One can recognise an N-acetyltransferase domain in the interval 55–195; it reads FAVRRSSTGL…MAFYRSRQQI (141 aa).

It localises to the cytoplasm. It is found in the plastid. The protein localises to the chloroplast. The catalysed reaction is serotonin + acetyl-CoA = N-acetylserotonin + CoA + H(+). It carries out the reaction tyramine + acetyl-CoA = N-acetyltyramine + CoA + H(+). It catalyses the reaction tryptamine + acetyl-CoA = N-acetyltryptamine + CoA + H(+). The enzyme catalyses 5-methoxytryptamine + acetyl-CoA = melatonin + CoA + H(+). It functions in the pathway aromatic compound metabolism; melatonin biosynthesis; melatonin from serotonin: step 1/2. Functionally, catalyzes the N-acetylation of serotonin into N-acetylserotonin, the penultimate step in the synthesis of melatonin. Catalyzes in vitro the N-acetylation of tryptamine to produce N-acetyltryptamine, 5-methoxytryptamine to produce melatonin and tyramine to produce N-acetyltyramine. This chain is Serotonin N-acetyltransferase 2, chloroplastic, found in Oryza sativa subsp. japonica (Rice).